Reading from the N-terminus, the 442-residue chain is Ribosomal protein uS12 methylthiotransferase RimO (442 aa).

Residues 13–129 (RSIFLLSLGC…ILNILGTAYD (117 aa)) enclose the MTTase N-terminal domain. Positions 22, 58, 92, 153, 157, and 160 each coordinate [4Fe-4S] cluster. Residues 139–369 (LSPSHYAWLK…MELQEGISEK (231 aa)) enclose the Radical SAM core domain. One can recognise a TRAM domain in the interval 372-439 (RALEEKALKV…AYELVGRIKN (68 aa)).

The protein belongs to the methylthiotransferase family. RimO subfamily. It depends on [4Fe-4S] cluster as a cofactor.

The protein resides in the cytoplasm. The catalysed reaction is L-aspartate(89)-[ribosomal protein uS12]-hydrogen + (sulfur carrier)-SH + AH2 + 2 S-adenosyl-L-methionine = 3-methylsulfanyl-L-aspartate(89)-[ribosomal protein uS12]-hydrogen + (sulfur carrier)-H + 5'-deoxyadenosine + L-methionine + A + S-adenosyl-L-homocysteine + 2 H(+). Its function is as follows. Catalyzes the methylthiolation of an aspartic acid residue of ribosomal protein uS12. The chain is Ribosomal protein uS12 methylthiotransferase RimO from Chlorobium phaeobacteroides (strain BS1).